The chain runs to 188 residues: Probable nicotinate-nucleotide adenylyltransferase (188 aa).

The protein belongs to the NadD family.

The catalysed reaction is nicotinate beta-D-ribonucleotide + ATP + H(+) = deamido-NAD(+) + diphosphate. The protein operates within cofactor biosynthesis; NAD(+) biosynthesis; deamido-NAD(+) from nicotinate D-ribonucleotide: step 1/1. Its function is as follows. Catalyzes the reversible adenylation of nicotinate mononucleotide (NaMN) to nicotinic acid adenine dinucleotide (NaAD). In Listeria innocua serovar 6a (strain ATCC BAA-680 / CLIP 11262), this protein is Probable nicotinate-nucleotide adenylyltransferase.